A 509-amino-acid polypeptide reads, in one-letter code: Histidine ammonia-lyase (509 aa).

Residues 144 to 146 (ASG) constitute a cross-link (5-imidazolinone (Ala-Gly)). The residue at position 145 (Ser-145) is a 2,3-didehydroalanine (Ser).

It belongs to the PAL/histidase family. Post-translationally, contains an active site 4-methylidene-imidazol-5-one (MIO), which is formed autocatalytically by cyclization and dehydration of residues Ala-Ser-Gly.

It is found in the cytoplasm. The enzyme catalyses L-histidine = trans-urocanate + NH4(+). The protein operates within amino-acid degradation; L-histidine degradation into L-glutamate; N-formimidoyl-L-glutamate from L-histidine: step 1/3. This is Histidine ammonia-lyase from Pseudoalteromonas atlantica (strain T6c / ATCC BAA-1087).